Consider the following 189-residue polypeptide: Putative manganese efflux pump MntP (189 aa).

Transmembrane regions (helical) follow at residues 2–22 (SLTE…AVSI), 36–56 (ILQM…IGYY), 71–91 (WIAF…SITA), 106–126 (LLLV…VSLS), 132–152 (ILYS…AAIL), and 167–187 (IVGG…HMFF).

It belongs to the MntP (TC 9.B.29) family.

It localises to the cell membrane. Functionally, probably functions as a manganese efflux pump. In Ruminiclostridium cellulolyticum (strain ATCC 35319 / DSM 5812 / JCM 6584 / H10) (Clostridium cellulolyticum), this protein is Putative manganese efflux pump MntP.